The chain runs to 378 residues: Outer membrane protein (378 aa).

The first 22 residues, 1–22, serve as a signal peptide directing secretion; sequence MRLRTALLATTLMAAAPVAANA. The OmpA-like domain maps to 258 to 378; that stretch reads PPAPTPARTY…QNRRVEIILH (121 aa).

Its subcellular location is the cell outer membrane. Functionally, growth enhancer. In Gluconacetobacter diazotrophicus (strain ATCC 49037 / DSM 5601 / CCUG 37298 / CIP 103539 / LMG 7603 / PAl5), this protein is Outer membrane protein.